The primary structure comprises 574 residues: Sulfate adenylyltransferase (574 aa).

Residues 1 to 169 (MANSPHGGVL…IEAVNKLNHY (169 aa)) are N-terminal. The segment at 170–394 (DYVALRYSPA…LRESSPPRAT (225 aa)) is catalytic. Residue Q197 participates in sulfate binding. Residues 197–200 (QTRN) and 291–294 (GRDH) each bind ATP. Catalysis depends on residues T198, R199, and N200. A sulfate-binding site is contributed by R199. Residue A295 participates in sulfate binding. Residue V333 participates in ATP binding. The segment at 395 to 574 (QGFTIFLTGY…LESEGYFDRL (180 aa)) is allosteric regulation domain; adenylyl-sulfate kinase-like. 3'-phosphoadenylyl sulfate contacts are provided by residues 434-437 (DTVR), R451, 477-478 (IA), and R516.

In the N-terminal section; belongs to the sulfate adenylyltransferase family. This sequence in the C-terminal section; belongs to the APS kinase family. In terms of assembly, homohexamer. Dimer of trimers.

It is found in the cytoplasm. It carries out the reaction sulfate + ATP + H(+) = adenosine 5'-phosphosulfate + diphosphate. It participates in sulfur metabolism; hydrogen sulfide biosynthesis; sulfite from sulfate: step 1/3. With respect to regulation, allosterically inhibited by 3'-phosphoadenosine 5'-phosphosulfate (PAPS). Functionally, catalyzes the first intracellular reaction of sulfate assimilation, forming adenosine-5'-phosphosulfate (APS) from inorganic sulfate and ATP. Plays an important role in sulfate activation as a component of the biosynthesis pathway of sulfur-containing amino acids. The chain is Sulfate adenylyltransferase from Aspergillus terreus (strain NIH 2624 / FGSC A1156).